A 742-amino-acid chain; its full sequence is MSLLLEPSKEQIKEEKLYQQMGVSDDEFALIESILGRLPNYTEIGIFSVMWSEHCSYKNSKPILRKFPTSGERVLQGPGEGAGIVDIGDNQAVVFKIESHNHPSALEPYQGAATGVGGIIRDVFSMGARPIAVLNSLRFGELTSPRVKYLFEEVVAGIAGYGNCIGIPTVGGEVQFDSSYEGNPLVNAMCVGLINHEDIKKGQAKGVGNTVMYVGAKTGRDGIHGATFASEEMSDSSEEKRSAVQVGDPFMEKLLLEACLEVIQCDALVGIQDMGAAGLTSSSAEMASKAGSGIEMNLDLIPQRETGMTAYEMMLSESQERMLLVIERGREQEIIDIFDKYDLEAVSVGHVTDDKMLRLTHKGEVVCELPVDALAEEAPVYHKPSQEPAYYREFLETDVPAPQIEDANEMLKALLQQPTIASKEWVYDQYDYMVRTNTVVAPGSDAGVLRIRGTKKALAMTTDCNARYLYLDPEVGGKIAVAEAARNIICSGAEPLAVTDNLNFGNPEKPEIFWQIEKAADGISEACNVLSTPVIGGNVSLYNESNGTAIYPTPVIGMVGLIEDTAHITTQHFKQAGDLVYVIGETKPEFAGSELQKMTEGRIYGKAPQIDLDVELSRQKALLDAIKKGFVQSAHDVSEGGLGVAIAESVMTTENLGANVTVEGEAALLFSESQSRFVVSVKKEHQAAFEATVKDAVHIGEVTADGILAIQNQDGQQMIHAQTKELERVWKGAIPCLLKSKA.

The active site involves histidine 54. Tyrosine 57 and lysine 96 together coordinate ATP. Mg(2+) is bound at residue glutamate 98. Substrate contacts are provided by residues 99-102 (SHNH) and arginine 121. Histidine 100 acts as the Proton acceptor in catalysis. Mg(2+) is bound at residue aspartate 122. Residues glycine 225 and glutamine 245 each contribute to the substrate site. Mg(2+) is bound at residue aspartate 273. Position 317–319 (317–319 (ESQ)) interacts with substrate. Position 537 (glycine 537) interacts with ATP. Asparagine 538 serves as a coordination point for Mg(2+). Serine 540 contributes to the substrate binding site.

Belongs to the FGAMS family. In terms of assembly, monomer. Part of the FGAM synthase complex composed of 1 PurL, 1 PurQ and 2 PurS subunits.

It is found in the cytoplasm. It carries out the reaction N(2)-formyl-N(1)-(5-phospho-beta-D-ribosyl)glycinamide + L-glutamine + ATP + H2O = 2-formamido-N(1)-(5-O-phospho-beta-D-ribosyl)acetamidine + L-glutamate + ADP + phosphate + H(+). The catalysed reaction is L-glutamine + H2O = L-glutamate + NH4(+). The protein operates within purine metabolism; IMP biosynthesis via de novo pathway; 5-amino-1-(5-phospho-D-ribosyl)imidazole from N(2)-formyl-N(1)-(5-phospho-D-ribosyl)glycinamide: step 1/2. Part of the phosphoribosylformylglycinamidine synthase complex involved in the purines biosynthetic pathway. Catalyzes the ATP-dependent conversion of formylglycinamide ribonucleotide (FGAR) and glutamine to yield formylglycinamidine ribonucleotide (FGAM) and glutamate. The FGAM synthase complex is composed of three subunits. PurQ produces an ammonia molecule by converting glutamine to glutamate. PurL transfers the ammonia molecule to FGAR to form FGAM in an ATP-dependent manner. PurS interacts with PurQ and PurL and is thought to assist in the transfer of the ammonia molecule from PurQ to PurL. The polypeptide is Phosphoribosylformylglycinamidine synthase subunit PurL (Bacillus subtilis (strain 168)).